Reading from the N-terminus, the 775-residue chain is Tumor necrosis factor alpha-induced protein 3 (775 aa).

Ala2 is subject to N-acetylalanine. The tract at residues 58–300 is TRAF-binding; sequence PQFREIIHKA…LTDPENEMKE (243 aa). Positions 92–263 constitute an OTU domain; that stretch reads LVALKTNGDG…SQHFVPLVTL (172 aa). Asp100 is a catalytic residue. Cys103 serves as the catalytic Nucleophile. 3 interaction with ubiquitin regions span residues 157-159, 190-192, and 224-227; these read LCY, SLE, and FAPL. Catalysis depends on His256, which acts as the Proton acceptor. Residues 369-775 are interaction with TNIP1; that stretch reads AQNPLEPSTP…ECYQFKQMYG (407 aa). The A20-type 1 zinc-finger motif lies at 381–416; the sequence is SLMDIKCETPNCPFFMSVNTQPLCHECSERRQKNQS. Positions 386 to 445 are interaction with RIPK1; sequence KCETPNCPFFMSVNTQPLCHECSERRQKNQSKLPKLNSKLGPEGLPGVGLGSSNWSPEET. Zn(2+)-binding residues include Cys387, Cys392, Cys404, and Cys407. A disordered region spans residues 415–455; that stretch reads QSKLPKLNSKLGPEGLPGVGLGSSNWSPEETAGGPHSAPPT. The residue at position 451 (Ser451) is a Phosphoserine. 2 consecutive A20-type zinc fingers follow at residues 464 to 499 and 500 to 533; these read ETTA…NASH and TADP…AEPS. Zn(2+) is bound by residues Cys470, Cys475, Cys487, Cys490, Cys506, Cys509, Cys521, and Cys524. A compositionally biased stretch (polar residues) spans 567–580; the sequence is TGNVSPSGCLSQAA. Positions 567-590 are disordered; it reads TGNVSPSGCLSQAARTPGDRAGTS. 4 consecutive A20-type zinc fingers follow at residues 586–621, 636–671, 695–730, and 741–775; these read RAGT…ENKQ, FQNN…NQRF, VASR…RVGS, and EPPK…QMYG. Positions 590 to 640 are required for proteasomal degradation of UBE2N and UBE2D3, TRAF6 deubiquitination, and TAX1BP1 interaction with UBE2N; the sequence is SKCRKAGCMYFGTPENKGFCTLCFIEYRENKQSVTASEKAGSPAPRFQNNV. Residues 591 to 775 form a sufficient for inhibitory activity of TNF-induced NF-kappa-B activity region; it reads KCRKAGCMYF…ECYQFKQMYG (185 aa). Zn(2+)-binding residues include Cys592, Cys597, Cys609, Cys612, Cys642, Cys647, Cys659, Cys662, Cys701, Cys706, Cys718, Cys721, Cys747, Cys752, Cys764, and Cys767. Residues 682–775 are required for lysosomal localization and for TRAF2 lysosomal degradation; the sequence is RSSQHRDMPR…ECYQFKQMYG (94 aa).

The protein belongs to the peptidase C64 family. As to quaternary structure, homodimer. Interacts with TNIP1, TAX1BP1 and TRAF2. Interacts with RNF11, ITCH and TAX1BP1 only after TNF stimulation; these interaction are transient and they are lost after 1 hour of stimulation with TNF. Interacts with YWHAZ and YWHAH. Interacts with IKBKG; the interaction is induced by TNF stimulation and by polyubiquitin. Interacts with RIPK1. Interacts with UBE2N; the interaction requires TAX1BP1. Interacts with TRAF6. As to expression, found in most tissues during development. Strikingly high levels are found in lymphoid organs, including the thymus, spleen, and gut-associated lymphoid tissue. Constitutively expressed in immature and mature thymocyte subpopulations as well as in resting peripheral T-cells; activation of these leads to down-regulation.

It localises to the cytoplasm. It is found in the nucleus. Its subcellular location is the lysosome. It carries out the reaction Thiol-dependent hydrolysis of ester, thioester, amide, peptide and isopeptide bonds formed by the C-terminal Gly of ubiquitin (a 76-residue protein attached to proteins as an intracellular targeting signal).. Its function is as follows. Ubiquitin-editing enzyme that contains both ubiquitin ligase and deubiquitinase activities. Involved in immune and inflammatory responses signaled by cytokines, such as TNF-alpha and IL-1 beta, or pathogens via Toll-like receptors (TLRs) through terminating NF-kappa-B activity. Essential component of a ubiquitin-editing protein complex, comprising also RNF11, ITCH and TAX1BP1, that ensures the transient nature of inflammatory signaling pathways. In cooperation with TAX1BP1 promotes disassembly of E2-E3 ubiquitin protein ligase complexes in IL-1R and TNFR-1 pathways; affected are at least E3 ligases TRAF6, TRAF2 and BIRC2, and E2 ubiquitin-conjugating enzymes UBE2N and UBE2D3. In cooperation with TAX1BP1 promotes ubiquitination of UBE2N and proteasomal degradation of UBE2N and UBE2D3. Upon TNF stimulation, deubiquitinates 'Lys-63'-polyubiquitin chains on RIPK1 and catalyzes the formation of 'Lys-48'-polyubiquitin chains. This leads to RIPK1 proteasomal degradation and consequently termination of the TNF- or LPS-mediated activation of NF-kappa-B. Deubiquitinates TRAF6 probably acting on 'Lys-63'-linked polyubiquitin. Upon T-cell receptor (TCR)-mediated T-cell activation, deubiquitinates 'Lys-63'-polyubiquitin chains on MALT1 thereby mediating disassociation of the CBM (CARD11:BCL10:MALT1) and IKK complexes and preventing sustained IKK activation. Deubiquitinates NEMO/IKBKG; the function is facilitated by TNIP1 and leads to inhibition of NF-kappa-B activation. Upon stimulation by bacterial peptidoglycans, probably deubiquitinates RIPK2. Can also inhibit I-kappa-B-kinase (IKK) through a non-catalytic mechanism which involves polyubiquitin; polyubiquitin promotes association with IKBKG and prevents IKK MAP3K7-mediated phosphorylation. Targets TRAF2 for lysosomal degradation. In vitro able to deubiquitinate 'Lys-11'-, 'Lys-48'- and 'Lys-63' polyubiquitin chains. Inhibitor of programmed cell death. Has a role in the function of the lymphoid system. Required for LPS-induced production of pro-inflammatory cytokines and IFN beta in LPS-tolerized macrophages. The polypeptide is Tumor necrosis factor alpha-induced protein 3 (Tnfaip3) (Mus musculus (Mouse)).